Reading from the N-terminus, the 638-residue chain is uncharacterized protein (638 aa).

This is an uncharacterized protein from Homo sapiens (Human).